The primary structure comprises 349 residues: Succinylglutamate desuccinylase (349 aa).

H70, E73, and H166 together coordinate Zn(2+). The active site involves E229.

The protein belongs to the AspA/AstE family. Succinylglutamate desuccinylase subfamily. Zn(2+) is required as a cofactor.

The catalysed reaction is N-succinyl-L-glutamate + H2O = L-glutamate + succinate. Its pathway is amino-acid degradation; L-arginine degradation via AST pathway; L-glutamate and succinate from L-arginine: step 5/5. Functionally, transforms N(2)-succinylglutamate into succinate and glutamate. In Burkholderia pseudomallei (strain 1710b), this protein is Succinylglutamate desuccinylase.